A 469-amino-acid chain; its full sequence is Sorting and assembly machinery component 50 homolog (469 aa).

The disordered stretch occupies residues 1–20 (MGTVHARSLEPLPSSGPDFG). The POTRA domain occupies 45–125 (VVVQHVHFDG…LDVTFEVTEL (81 aa)). Lysine 255 is modified (N6-methyllysine).

This sequence belongs to the SAM50/omp85 family. Associates with the mitochondrial contact site and cristae organizing system (MICOS) complex, composed of at least MICOS10/MIC10, CHCHD3/MIC19, CHCHD6/MIC25, APOOL/MIC27, IMMT/MIC60, APOO/MIC23/MIC26 and QIL1/MIC13. This complex was also known under the names MINOS or MitOS complex. The MICOS complex associates with mitochondrial outer membrane proteins SAMM50, MTX1 and MTX2 (together described as components of the mitochondrial outer membrane sorting assembly machinery (SAM) complex) and DNAJC11, mitochondrial inner membrane protein TMEM11 and with HSPA9. The MICOS and SAM complexes together with DNAJC11 are part of a large protein complex spanning both membranes termed the mitochondrial intermembrane space bridging (MIB) complex. Interacts with CHCHD3/MIC19. Interacts with ARMC1. In terms of assembly, (Microbial infection) Interacts with parasite T.gondii RH strain MAF1b1; the interaction is probably indirect and results in the disruption of the MIB complex and the formation of SPOTs (structures positive for outer mitochondrial membrane (OMM)), a cellular response to OMM stress, which leads to the constitutive shedding of OMM vesicles.

Its subcellular location is the mitochondrion outer membrane. It is found in the cytoplasm. The protein resides in the mitochondrion. In terms of biological role, plays a crucial role in the maintenance of the structure of mitochondrial cristae and the proper assembly of the mitochondrial respiratory chain complexes. Required for the assembly of TOMM40 into the TOM complex. This chain is Sorting and assembly machinery component 50 homolog (SAMM50), found in Homo sapiens (Human).